Reading from the N-terminus, the 427-residue chain is Citrate synthase (427 aa).

Active-site residues include histidine 306 and aspartate 363.

This sequence belongs to the citrate synthase family. In terms of assembly, homohexamer.

The catalysed reaction is oxaloacetate + acetyl-CoA + H2O = citrate + CoA + H(+). It participates in carbohydrate metabolism; tricarboxylic acid cycle; isocitrate from oxaloacetate: step 1/2. With respect to regulation, allosterically inhibited by NADH. This is Citrate synthase (gltA) from Salmonella typhimurium (strain LT2 / SGSC1412 / ATCC 700720).